A 412-amino-acid polypeptide reads, in one-letter code: Alanyl-tRNA editing protein Aarsd1-B (412 aa).

4 residues coordinate Zn(2+): histidine 108, histidine 112, cysteine 208, and histidine 212.

Belongs to the class-II aminoacyl-tRNA synthetase family. Alax-L subfamily. It depends on Zn(2+) as a cofactor.

The protein localises to the cytoplasm. Its function is as follows. Functions in trans to edit the amino acid moiety from incorrectly charged tRNA(Ala). The chain is Alanyl-tRNA editing protein Aarsd1-B (aarsd1-b) from Xenopus laevis (African clawed frog).